We begin with the raw amino-acid sequence, 259 residues long: Type III pantothenate kinase (259 aa).

Residue 6–13 (DVGNTNCT) participates in ATP binding. 107-110 (GSDR) lines the substrate pocket. D109 acts as the Proton acceptor in catalysis. D129 serves as a coordination point for K(+). ATP is bound at residue T132. Residue T184 coordinates substrate.

Belongs to the type III pantothenate kinase family. In terms of assembly, homodimer. It depends on NH4(+) as a cofactor. The cofactor is K(+).

The protein localises to the cytoplasm. It carries out the reaction (R)-pantothenate + ATP = (R)-4'-phosphopantothenate + ADP + H(+). The protein operates within cofactor biosynthesis; coenzyme A biosynthesis; CoA from (R)-pantothenate: step 1/5. Catalyzes the phosphorylation of pantothenate (Pan), the first step in CoA biosynthesis. This Listeria welshimeri serovar 6b (strain ATCC 35897 / DSM 20650 / CCUG 15529 / CIP 8149 / NCTC 11857 / SLCC 5334 / V8) protein is Type III pantothenate kinase.